An 883-amino-acid polypeptide reads, in one-letter code: Phosphoenolpyruvate carboxylase (883 aa).

Catalysis depends on residues H138 and K546.

The protein belongs to the PEPCase type 1 family. As to quaternary structure, homotetramer. The cofactor is Mg(2+).

It catalyses the reaction oxaloacetate + phosphate = phosphoenolpyruvate + hydrogencarbonate. Its activity is regulated as follows. The enzyme has distinct binding sites for each of the allosteric effectors such as acetyl-CoA, fructose 1,6-bisphosphate, guanosine 3'-diphosphate 5'-diphosphate, long chain fatty acids, and L-aspartate. Functionally, forms oxaloacetate, a four-carbon dicarboxylic acid source for the tricarboxylic acid cycle. The protein is Phosphoenolpyruvate carboxylase (ppc) of Salmonella typhi.